The chain runs to 780 residues: MAAPGGRSEPPQLPEYSCSYMVSRPVYSELAFQQQHERRLQERKTLRESLAKCCSCSRKRAFGVLKTLVPILEWLPKYRVKEWLLSDVISGVSTGLVATLQGMAYALLAAVPVGYGLYSAFFPILTYFIFGTSRHISVGPFPVVSLMVGSVVLSMAPDEHFLVSSSNGTVLNTTMIDTAARDTARVLIASALTLLVGIIQLIFGGLQIGFIVRYLADPLVGGFTTAAAFQVLVSQLKIVLNVSTKNYNGVLSIIYTLVEIFQNIGDTNLADFTAGLLTIVVCMAVKELNDRFRHKIPVPIPIEVIVTIIATAISYGANLEKNYNAGIVKSIPRGFLPPELPPVSLFSEMLAASFSIAVVAYAIAVSVGKVYATKYDYTIDGNQEFIAFGISNIFSGFFSCFVATTALSRTAVQESTGGKTQVAGIISAAIVMIAILALGKLLEPLQKSVLAAVVIANLKGMFMQLCDIPRLWRQNKIDAVIWVFTCIVSIILGLDLGLLAGLIFGLLTVVLRVQFPSWNGLGSIPSTDIYKSTKNYKNIEEPQGVKILRFSSPIFYGNVDGFKKCIKSTVGFDAIRVYNKRLKALRKIQKLIKSGQLRATKNGIISDAVSTNNAFEPDEDIEDLEELDIPTKEIEIQVDWNSELPVKVNVPKVPIHSLVLDCGAISFLDVVGVRSLRVIVKEFQRIDVNVYFASLQDYVIEKLEQCGFFDDNIRKDTFFLTVHDAILYLQNQVKSQEGQGSILETITLIQDCKDTLELIETELTEEELDVQDEAMRTLAS.

Topologically, residues 1–87 (MAAPGGRSEP…YRVKEWLLSD (87 aa)) are cytoplasmic. Residues 88-108 (VISGVSTGLVATLQGMAYALL) form a helical membrane-spanning segment. Position 109 (Ala-109) is a topological domain, extracellular. Residues 110–130 (AVPVGYGLYSAFFPILTYFIF) traverse the membrane as a helical segment. Over 131-135 (GTSRH) the chain is Cytoplasmic. A helical membrane pass occupies residues 136–156 (ISVGPFPVVSLMVGSVVLSMA). The Extracellular segment spans residues 157 to 191 (PDEHFLVSSSNGTVLNTTMIDTAARDTARVLIASA). Residues 192–212 (LTLLVGIIQLIFGGLQIGFIV) traverse the membrane as a helical segment. Residues 213 to 218 (RYLADP) are Cytoplasmic-facing. A helical transmembrane segment spans residues 219–239 (LVGGFTTAAAFQVLVSQLKIV). Over 240–263 (LNVSTKNYNGVLSIIYTLVEIFQN) the chain is Extracellular. A helical transmembrane segment spans residues 264–284 (IGDTNLADFTAGLLTIVVCMA). At 285–295 (VKELNDRFRHK) the chain is on the cytoplasmic side. The chain crosses the membrane as a helical span at residues 296 to 316 (IPVPIPIEVIVTIIATAISYG). At 317 to 344 (ANLEKNYNAGIVKSIPRGFLPPELPPVS) the chain is on the extracellular side. The helical transmembrane segment at 345 to 365 (LFSEMLAASFSIAVVAYAIAV) threads the bilayer. Topologically, residues 366–384 (SVGKVYATKYDYTIDGNQE) are cytoplasmic. The helical transmembrane segment at 385-405 (FIAFGISNIFSGFFSCFVATT) threads the bilayer. At 406–421 (ALSRTAVQESTGGKTQ) the chain is on the extracellular side. The chain crosses the membrane as a helical span at residues 422-442 (VAGIISAAIVMIAILALGKLL). Topologically, residues 443–448 (EPLQKS) are cytoplasmic. The helical transmembrane segment at 449–469 (VLAAVVIANLKGMFMQLCDIP) threads the bilayer. Over 470-486 (RLWRQNKIDAVIWVFTC) the chain is Extracellular. Residues 487 to 507 (IVSIILGLDLGLLAGLIFGLL) form a helical membrane-spanning segment. Residues 508-780 (TVVLRVQFPS…QDEAMRTLAS (273 aa)) lie on the Cytoplasmic side of the membrane. The STAS domain maps to 535–729 (NYKNIEEPQG…LTVHDAILYL (195 aa)).

Belongs to the SLC26A/SulP transporter (TC 2.A.53) family. In terms of assembly, interacts with IQGAP1; this interaction enhances the chloride-bicarbonate exchange activity of SLC26A4. In terms of tissue distribution, highly expressed in the kidney (at protein level). High expression in adult thyroid, lower expression in adult and fetal kidney and fetal brain. Not expressed in other tissues.

It is found in the cell membrane. It localises to the apical cell membrane. The enzyme catalyses chloride(in) = chloride(out). The catalysed reaction is iodide(out) = iodide(in). It carries out the reaction hydrogencarbonate(in) + chloride(out) = hydrogencarbonate(out) + chloride(in). It catalyses the reaction iodide(in) + hydrogencarbonate(out) = iodide(out) + hydrogencarbonate(in). The enzyme catalyses iodide(in) + chloride(out) = iodide(out) + chloride(in). The catalysed reaction is formate(in) + chloride(out) = formate(out) + chloride(in). Functionally, sodium-independent transporter of chloride and iodide. Mediates electroneutral chloride-bicarbonate, chloride-iodide and chloride-formate exchange with 1:1 stoichiometry. Mediates electroneutral iodide-bicarbonate exchange. The chain is Pendrin (SLC26A4) from Homo sapiens (Human).